A 316-amino-acid chain; its full sequence is tRNA dimethylallyltransferase (316 aa).

17–24 is an ATP binding site; it reads GPTASGKT. 19-24 is a binding site for substrate; it reads TASGKT. Interaction with substrate tRNA stretches follow at residues 42–45, 166–170, 247–252, and 280–287; these read DSAL, QRLSR, RCVGYR, and KRQITWLR.

This sequence belongs to the IPP transferase family. In terms of assembly, monomer. Requires Mg(2+) as cofactor.

The catalysed reaction is adenosine(37) in tRNA + dimethylallyl diphosphate = N(6)-dimethylallyladenosine(37) in tRNA + diphosphate. Catalyzes the transfer of a dimethylallyl group onto the adenine at position 37 in tRNAs that read codons beginning with uridine, leading to the formation of N6-(dimethylallyl)adenosine (i(6)A). This is tRNA dimethylallyltransferase from Escherichia coli O6:K15:H31 (strain 536 / UPEC).